The following is a 217-amino-acid chain: MFVHNEVNLRLEKKQFLRSYGRRRGRNFRENKLVGLERFLASHEKLENLKSEIVLEVGFGFGEHILKKAIDYPDKVFVGAEVYVNGIARLLEQVELHELSNVLIWNDDVRLLLEKLLCKVFHKVYILFPDPWPKRRHHKRRIVDVPFFQLLSRSLHPLAEVVVATDDHDYAQQIYQSALEVFSKVENTEIPKNASRFASKASNRIFGYKMVYDATDA.

Glutamate 56, glutamate 81, aspartate 108, and aspartate 130 together coordinate S-adenosyl-L-methionine. Residue aspartate 130 is part of the active site. Positions 134 and 166 each coordinate substrate.

Belongs to the class I-like SAM-binding methyltransferase superfamily. TrmB family.

It catalyses the reaction guanosine(46) in tRNA + S-adenosyl-L-methionine = N(7)-methylguanosine(46) in tRNA + S-adenosyl-L-homocysteine. The protein operates within tRNA modification; N(7)-methylguanine-tRNA biosynthesis. In terms of biological role, catalyzes the formation of N(7)-methylguanine at position 46 (m7G46) in tRNA. The chain is tRNA (guanine-N(7)-)-methyltransferase from Neorickettsia sennetsu (strain ATCC VR-367 / Miyayama) (Ehrlichia sennetsu).